A 557-amino-acid polypeptide reads, in one-letter code: MRSHGRWGPCFLLFLLLLPPPLFRAGSLRYHGPGWRMFQRLALGSRRANHHHGPGWRQQLRQGQAGHRCQGSFDLYFILDKSGSVNNNWIDLYMWVEETVARFQSSDIRMCFITYSTDGQTVLPLTSDKNRIKNGLDQLRKIVPDGHTFMQAGFRKAIQQIETFNSGNKVPSMIIAMTDGELVAHAFQDTLREAQKARKLGANVYTVDVADYKLDQITAIADSPEHVFAVENGFKAMRDTVDALTSKVCLDVTSVEPPTVCVGEPYHVVVHGNGFQNLKKQDEVICRFIFNETTIVDEKPTSIDNNSMNCPGPKLEKPGEEYFIEVSLNNGKTFFKSNVSVTSSTCGIFSNWLYFLLPLLLLPLLLCCLWRLCRKKTVKEPPPVQKPEKEPEQEKPPPPPPPSPPPPLPPPPPPPPPVNTCPTVIVCCCACQGVCGIRGIEGNLDTFCDLSHPSCCQVPWMWCQRRDQGRYLSLALAQSQYAQAPCCPRIGFPHSQESPSLPETQPGVLFPSTDSVQPKELPSTWPAVPPHCSGTLQNPLCPSLPRSPTSKAPNTQD.

The signal sequence occupies residues 1 to 25; the sequence is MRSHGRWGPCFLLFLLLLPPPLFRA. Over 26–345 the chain is Extracellular; the sequence is GSLRYHGPGW…KSNVSVTSST (320 aa). In terms of domain architecture, VWFA spans 74–244; sequence DLYFILDKSG…KAMRDTVDAL (171 aa). The a divalent metal cation site is built by serine 82, serine 84, and threonine 148. The helical transmembrane segment at 346 to 366 threads the bilayer; the sequence is CGIFSNWLYFLLPLLLLPLLL. Residues 367–557 lie on the Cytoplasmic side of the membrane; sequence CCLWRLCRKK…PTSKAPNTQD (191 aa). Disordered regions lie at residues 380–411 and 497–557; these read EPPP…LPPP and ESPS…NTQD. The span at 386-395 shows a compositional bias: basic and acidic residues; the sequence is KPEKEPEQEK. Residues 396 to 411 show a composition bias toward pro residues; the sequence is PPPPPPPSPPPPLPPP. Over residues 534 to 557 the composition is skewed to polar residues; sequence GTLQNPLCPSLPRSPTSKAPNTQD.

The protein belongs to the ATR family.

The protein resides in the membrane. The chain is Anthrax toxin receptor-like (ANTXRL) from Macaca fascicularis (Crab-eating macaque).